Reading from the N-terminus, the 860-residue chain is Leucine--tRNA ligase (860 aa).

Residues 73–83 (VLQPIGWDAFG) carry the 'HIGH' region motif. The 'KMSKS' region motif lies at 650-654 (SPADM). D653 lines the ATP pocket.

Belongs to the class-I aminoacyl-tRNA synthetase family.

It localises to the cytoplasm. The enzyme catalyses tRNA(Leu) + L-leucine + ATP = L-leucyl-tRNA(Leu) + AMP + diphosphate. This Shigella flexneri protein is Leucine--tRNA ligase.